Reading from the N-terminus, the 441-residue chain is Arginine biosynthesis bifunctional protein ArgJ, mitochondrial (441 aa).

The transit peptide at 1-8 (MRISSTLL) directs the protein to the mitochondrion. 6 residues coordinate substrate: Thr-177, Lys-204, Thr-215, Glu-301, Asn-436, and Ser-441. The Nucleophile role is filled by Thr-215.

Belongs to the ArgJ family. Heterodimer of an alpha and a beta chain. Post-translationally, the alpha and beta chains are autoproteolytically processed from a single precursor protein within the mitochondrion.

The protein localises to the mitochondrion matrix. The catalysed reaction is N(2)-acetyl-L-ornithine + L-glutamate = N-acetyl-L-glutamate + L-ornithine. It catalyses the reaction L-glutamate + acetyl-CoA = N-acetyl-L-glutamate + CoA + H(+). The protein operates within amino-acid biosynthesis; L-arginine biosynthesis; L-ornithine and N-acetyl-L-glutamate from L-glutamate and N(2)-acetyl-L-ornithine (cyclic): step 1/1. Its pathway is amino-acid biosynthesis; L-arginine biosynthesis; N(2)-acetyl-L-ornithine from L-glutamate: step 1/4. Its activity is regulated as follows. Inhibited by ornithine. Its function is as follows. Catalyzes two activities which are involved in the cyclic version of arginine biosynthesis: the synthesis of acetylglutamate from glutamate and acetyl-CoA, and of ornithine by transacetylation between acetylornithine and glutamate. In Saccharomyces cerevisiae (strain ATCC 204508 / S288c) (Baker's yeast), this protein is Arginine biosynthesis bifunctional protein ArgJ, mitochondrial.